The primary structure comprises 494 residues: Ketol-acid reductoisomerase (NADP(+)) (494 aa).

Residues 14–208 (LDQLGRCRFM…GGHRAGCLES (195 aa)) form the KARI N-terminal Rossmann domain. Residues 45–48 (CGAQ), Arg68, Arg76, Ser78, and 108–110 (DKQ) contribute to the NADP(+) site. His132 is a catalytic residue. Residue Gly158 coordinates NADP(+). KARI C-terminal knotted domains lie at 209–344 (SFVA…NYPD) and 345–487 (SSLE…MTDM). Asp217, Glu221, Glu389, and Glu393 together coordinate Mg(2+). Position 414 (Ser414) interacts with substrate.

It belongs to the ketol-acid reductoisomerase family. Mg(2+) is required as a cofactor.

It catalyses the reaction (2R)-2,3-dihydroxy-3-methylbutanoate + NADP(+) = (2S)-2-acetolactate + NADPH + H(+). It carries out the reaction (2R,3R)-2,3-dihydroxy-3-methylpentanoate + NADP(+) = (S)-2-ethyl-2-hydroxy-3-oxobutanoate + NADPH + H(+). It participates in amino-acid biosynthesis; L-isoleucine biosynthesis; L-isoleucine from 2-oxobutanoate: step 2/4. The protein operates within amino-acid biosynthesis; L-valine biosynthesis; L-valine from pyruvate: step 2/4. In terms of biological role, involved in the biosynthesis of branched-chain amino acids (BCAA). Catalyzes an alkyl-migration followed by a ketol-acid reduction of (S)-2-acetolactate (S2AL) to yield (R)-2,3-dihydroxy-isovalerate. In the isomerase reaction, S2AL is rearranged via a Mg-dependent methyl migration to produce 3-hydroxy-3-methyl-2-ketobutyrate (HMKB). In the reductase reaction, this 2-ketoacid undergoes a metal-dependent reduction by NADPH to yield (R)-2,3-dihydroxy-isovalerate. This is Ketol-acid reductoisomerase (NADP(+)) from Aliivibrio salmonicida (strain LFI1238) (Vibrio salmonicida (strain LFI1238)).